Consider the following 32-residue polypeptide: Calcitonin (32 aa).

Residues Cys1 and Cys7 are joined by a disulfide bond. Pro32 carries the proline amide modification.

Belongs to the calcitonin family.

The protein localises to the secreted. Its function is as follows. Causes a rapid but short-lived drop in the level of calcium and phosphate in blood by promoting the incorporation of those ions in the bones. This chain is Calcitonin, found in Aquarana catesbeiana (American bullfrog).